We begin with the raw amino-acid sequence, 551 residues long: Trigger factor (551 aa).

The region spanning glycine 165–threonine 250 is the PPIase FKBP-type domain. The tract at residues alanine 442–glutamate 551 is disordered. Over residues glycine 458–alanine 472 the composition is skewed to basic and acidic residues. Residues glutamate 513–lysine 541 show a composition bias toward low complexity. Residues alanine 542–glutamate 551 show a composition bias toward basic residues.

Belongs to the FKBP-type PPIase family. Tig subfamily.

The protein localises to the cytoplasm. It catalyses the reaction [protein]-peptidylproline (omega=180) = [protein]-peptidylproline (omega=0). In terms of biological role, involved in protein export. Acts as a chaperone by maintaining the newly synthesized protein in an open conformation. Functions as a peptidyl-prolyl cis-trans isomerase. The protein is Trigger factor of Rhizorhabdus wittichii (strain DSM 6014 / CCUG 31198 / JCM 15750 / NBRC 105917 / EY 4224 / RW1) (Sphingomonas wittichii).